The chain runs to 605 residues: Elongation factor 4 (605 aa).

Residues 11–193 (EKIRNFSIIA…QIVEKVPAPT (183 aa)) form the tr-type G domain. GTP-binding positions include 23–28 (DHGKST) and 140–143 (NKID).

Belongs to the TRAFAC class translation factor GTPase superfamily. Classic translation factor GTPase family. LepA subfamily.

The protein resides in the cell membrane. The enzyme catalyses GTP + H2O = GDP + phosphate + H(+). Functionally, required for accurate and efficient protein synthesis under certain stress conditions. May act as a fidelity factor of the translation reaction, by catalyzing a one-codon backward translocation of tRNAs on improperly translocated ribosomes. Back-translocation proceeds from a post-translocation (POST) complex to a pre-translocation (PRE) complex, thus giving elongation factor G a second chance to translocate the tRNAs correctly. Binds to ribosomes in a GTP-dependent manner. The polypeptide is Elongation factor 4 (Streptococcus pyogenes serotype M4 (strain MGAS10750)).